A 613-amino-acid chain; its full sequence is GPI mannosyltransferase 3 (613 aa).

Residue asparagine 19 is glycosylated (N-linked (GlcNAc...) asparagine). The next 12 helical transmembrane spans lie at 22–42 (FFLRDIIVIRLINAWWIATFF), 83–103 (LFAGVYLVADFISSHILPVGI), 106–126 (ATILVAVPQALQAVIAGLGDW), 132–152 (AVSIYGANSNVSFFALFLQIF), 168–188 (LEMTLTVMAMYYWPWELLGVA), 216–236 (LAVVLRPTNILIWATIVLFTI), 252–272 (VVTLIREAIWCGSLILAISAA), 280–300 (FWTFPAYNFLYFNLSKSLAVF), 309–329 (YFLQGLPLICTTSLPFAVASL), 342–362 (FNVLKTLAYTVFTTVGALSLI), 369–389 (FIYPLLPALSILAAPYTASFF), and 411–431 (YLFVALGVNMFLAGYLSFFHQ).

This sequence belongs to the glycosyltransferase 22 family. PIGB subfamily.

Its subcellular location is the endoplasmic reticulum membrane. Its pathway is glycolipid biosynthesis; glycosylphosphatidylinositol-anchor biosynthesis. Its function is as follows. Mannosyltransferase involved in glycosylphosphatidylinositol-anchor biosynthesis. Transfers the third mannose to Man2-GlcN-acyl-PI during GPI precursor assembly. This Gibberella zeae (strain ATCC MYA-4620 / CBS 123657 / FGSC 9075 / NRRL 31084 / PH-1) (Wheat head blight fungus) protein is GPI mannosyltransferase 3 (GPI10).